The primary structure comprises 218 residues: Adenylate kinase (218 aa).

10–15 (GAGKGT) is a binding site for ATP. Positions 30–59 (STGDMLRAAVKAGTPLGIEAKKVMDAGGLM) are NMP. Residues Thr-31, Arg-36, 57–59 (GLM), 85–88 (GYPR), and Gln-92 each bind AMP. The interval 122–159 (GRWVHLASGRSYNTQSNPPKVAGQDDITGEALIQRDDD) is LID. Residues Arg-123 and 132-133 (SY) each bind ATP. AMP is bound by residues Arg-156 and Arg-167. Residue Gly-203 coordinates ATP.

Belongs to the adenylate kinase family. As to quaternary structure, monomer.

Its subcellular location is the cytoplasm. It catalyses the reaction AMP + ATP = 2 ADP. The protein operates within purine metabolism; AMP biosynthesis via salvage pathway; AMP from ADP: step 1/1. In terms of biological role, catalyzes the reversible transfer of the terminal phosphate group between ATP and AMP. Plays an important role in cellular energy homeostasis and in adenine nucleotide metabolism. This chain is Adenylate kinase, found in Bordetella avium (strain 197N).